The sequence spans 340 residues: MNICVNSLYRLSTPQFQNLYSEEVSDEGLALLIREVENGDQNCIDLLCNLALRNDDLGHKVEKILFDLFSGKKHGSPDIDKKINQACLMLYQTANNDIAKNNTDFKKLHIPSRLLYMAGSATPDFSKKLEIAHKILGDQIAQTEEEQVGVENLWCPARMVSSDELSRATQGMTQGLSLSVNYPIGLIHPTTGENVLSAQLHEKVAQSGLSDNEVFLINTESHWIFCLFYKIAEKIKCLIFNTHHDLNQNTKQEIRAAAKIAGASEEGDVNFIEIDLQNNVPNGCGLFCFQALQLLSATGQNDPVAVLREYSENFLRLSVEEQTLFNTETRRKIHEYSLTS.

H222 is a catalytic residue. C284 (nucleophile) is an active-site residue.

The protein belongs to the peptidase C79 family.

The protein resides in the secreted. The protein localises to the host cytoplasm. Effector proteins function to alter host cell physiology and promote bacterial survival in host tissues. This protease targets the host cell ubiquitin pathway by acting as a deubiquitinase in infected host cells. This chain is Deubiquitinase SseL (sseL), found in Salmonella arizonae (strain ATCC BAA-731 / CDC346-86 / RSK2980).